The chain runs to 488 residues: HSPB1-associated protein 1 (488 aa).

The interval 88–208 (ETTCNYVEAT…EDTPFLYPTR (121 aa)) is interaction with HSPB1. Residues 124–288 (WAYADYKYFV…HLARVEEAIT (165 aa)) form the JmjC domain. Residues 369-379 (QTGSQNLTTGT) show a composition bias toward polar residues. The disordered stretch occupies residues 369-415 (QTGSQNLTTGTDKPEAASPFGPDLVPVAQRSEEPPSERGGIFGSDGK).

In terms of assembly, interacts with CRYAB and HSPB1. In terms of tissue distribution, widely expressed.

It is found in the cytoplasm. Functionally, may play a role in cellular stress response. This Homo sapiens (Human) protein is HSPB1-associated protein 1 (HSPBAP1).